The primary structure comprises 395 residues: MNFQRMTDLNLAGKRVLIREDLNVPVKNGVITSDARLRAALPTIKAALEKGAAVMVFSHLGRPVEGEPKPEQSLAPVAAYLTEALGQEVKLFTDYLDGVEVEAGQVVLLENVRFNPGEKKNNPELAQKYAALCDVFVMDAFGTAHRAEASTEGVARFAPVAAAGPLLAAELDALGRAMQTPEKPMVAIVAGSKVSTKLDVLNSLSGICDQLIVGGGIANTFLAAAGYNVGKSLYEADLVETAKQIAAKVSVPLPTDVVVADASQINFEDFLGSLAAAQAVIKKVEDVTANDMILDVGPETAKAFANILTTSKTILWNGPVGVFEVDQFGEGTKALSLAVAQSDAFSIAGGGDTLAAIDKYNVADQIGYISTGGGAFLEFVEGKTLPAVAVLLERA.

Residues 21–23 (DLN), R36, 59–62 (HLGR), R113, and R146 contribute to the substrate site. Residues K197, E324, and 350-353 (GGDT) each bind ATP.

The protein belongs to the phosphoglycerate kinase family. Monomer.

The protein resides in the cytoplasm. The enzyme catalyses (2R)-3-phosphoglycerate + ATP = (2R)-3-phospho-glyceroyl phosphate + ADP. It participates in carbohydrate degradation; glycolysis; pyruvate from D-glyceraldehyde 3-phosphate: step 2/5. The sequence is that of Phosphoglycerate kinase from Acinetobacter baumannii (strain AB307-0294).